We begin with the raw amino-acid sequence, 1059 residues long: Ubiquitin carboxyl-terminal hydrolase 36 (1059 aa).

2 disordered regions span residues 22–45 and 102–145; these read LGGNSSAGSSTDQAKSGEDTNGSL and GKLV…KPKR. Residues 23-45 are compositionally biased toward polar residues; that stretch reads GGNSSAGSSTDQAKSGEDTNGSL. Low complexity predominate over residues 121–138; it reads HPNNQSHHNHPHPTSNPN. Positions 168–457 constitute a USP domain; sequence TGMINVGNTC…NAYIMFFELD (290 aa). Cysteine 177 functions as the Nucleophile in the catalytic mechanism. Histidine 416 acts as the Proton acceptor in catalysis. 4 disordered regions span residues 464-512, 554-853, 941-1005, and 1022-1059; these read PPAN…YTNG, ATSA…VTSN, RQRD…FYNQ, and FGGAGSAKFQQQRALQRHLSAGGGFSRRQPSAQQQQQT. 2 stretches are compositionally biased toward low complexity: residues 479-494 and 561-580; these read STTPVPAATVSSPSPT and NGNKSSSPSSNSSSNHKSIN. Phosphoserine occurs at positions 490 and 492. Polar residues predominate over residues 603-615; sequence TTAQLPSMPNMTE. Threonine 632 and threonine 636 each carry phosphothreonine. Phosphoserine is present on residues serine 646 and serine 648. Residues 673–702 show a composition bias toward polar residues; sequence ESGQTNGHSKTNGSLTNGSASSSVHVNNSK. Over residues 703 to 720 the composition is skewed to basic and acidic residues; it reads QKTDAIDEIFKSLKKSAD. Serine 721 carries the phosphoserine modification. The span at 721–730 shows a compositional bias: acidic residues; it reads SEEDDDEEEP. Low complexity predominate over residues 740 to 750; that stretch reads PQKQSQSQSKA. Positions 751–760 are enriched in pro residues; sequence PPSPKTPPSP. Serine 753 is modified (phosphoserine). Threonine 756 carries the phosphothreonine modification. At serine 759 the chain carries Phosphoserine. Acidic residues predominate over residues 779–788; it reads DAIDDDDDAV. Phosphothreonine is present on threonine 799. The segment covering 806–818 has biased composition (polar residues); sequence NPFSSSKPSTDSP. Phosphoserine is present on serine 817. At threonine 820 the chain carries Phosphothreonine. Residues 833–853 show a composition bias toward polar residues; the sequence is ALKSHQQPRVGNGYQSNVTSN. The segment covering 963–974 has biased composition (low complexity); sequence SGSAKGNNASNS.

Belongs to the peptidase C19 family. In terms of assembly, interacts with atms/PAF1, but not with CycT.

Its subcellular location is the nucleus. The protein resides in the nucleolus. It catalyses the reaction Thiol-dependent hydrolysis of ester, thioester, amide, peptide and isopeptide bonds formed by the C-terminal Gly of ubiquitin (a 76-residue protein attached to proteins as an intracellular targeting signal).. Functionally, required for maintaining multiple types of adult stem cells, including male and female germline, epithelial follicle cell and intestinal stem cells. May function as a transcriptional repressor by continually deubiquiting histone H2B at the promoters of genes critical for cellular differentiation, thereby preventing histone H3 'Lys-4' trimethylation (H3K4). Controls selective autophagy activation by ubiquitinated proteins. The chain is Ubiquitin carboxyl-terminal hydrolase 36 (Usp36) from Drosophila sechellia (Fruit fly).